Reading from the N-terminus, the 709-residue chain is MGCLWGLALPLFFFCWEVGVSGSSAGPSTRRADTAMTTDDTEVPAMTLAPGHAALETQTLSAETSSRASTPAGPIPEAETRGAKRISPARETRSFTKTSPNFMVLIATSVETSAASGSPEGAGMTTVQTITGSDPREAIFDTLCTDDSSEEAKTLTMDILTLAHTSTEAKGLSSESSASSDSPHPVITPSRASESSASSDGPHPVITPSRASESSASSDGPHPVITPSRASESSASSDGPHPVITPSRASESSASSDGPHPVITPSRASESSASSDGPHPVITPSRASESSASSDGPHPVITPSRASESSASSDGPHPVITPSRASESSASSDGPHPVITPSRASESSASSDGLHPVITPSRASESSASSDGPHPVITPSRASESSASSDGPHPVITPSWSPGSDVTLLAEALVTVTNIEVINCSITEIETTTSSIPGASDTDLIPTEGVKASSTSDPPALPDSTEAKPHITEVTASAETLSTAGTTESAAPDATVGTPLPTNSATEREVTAPGATTLSGALVTVSRNPLEETSALSVETPSYVKVSGAAPVSIEAGSAVGKTTSFAGSSASSYSPSEAALKNFTPSETPTMDIATKGPFPTSRDPLPSVPPTTTNSSRGTNSTLAKITTSAKTTMKPPTATPTTARTRPTTDVSAGENGGFLLLRLSVASPEDLTDPRVAERLMQQLHRELHAHAPHFQVSLLRVRRG.

Positions 1 to 25 are cleaved as a signal peptide; sequence MGCLWGLALPLFFFCWEVGVSGSSA. Residues 57 to 69 show a composition bias toward polar residues; it reads TQTLSAETSSRAS. Disordered regions lie at residues 57–92 and 170–403; these read TQTL…ARET and KGLS…WSPG. A compositionally biased stretch (basic and acidic residues) spans 78 to 92; the sequence is AETRGAKRISPARET. Low complexity-rich tracts occupy residues 173–182, 190–199, 209–218, 228–237, 247–256, 266–275, 285–294, 304–313, 323–332, 342–351, 361–370, and 380–389; these read SSESSASSDS and SRASESSASS. 11 tandem repeats follow at residues 173-192, 193-211, 212-230, 231-249, 250-268, 269-287, 288-306, 307-325, 326-344, 345-363, and 364-382. The tract at residues 173–400 is 12 X 20 AA approximate tandem repeats of S-S-E-S-S-A-S-S-D-S-P-H-P-V-I-T-P-S-R-A; it reads SSESSASSDS…GPHPVITPSW (228 aa). One copy of the 12; approximate repeat lies at 383-400; that stretch reads SESSASSDGPHPVITPSW. Residue Asn-423 is glycosylated (N-linked (GlcNAc...) asparagine). Disordered stretches follow at residues 434 to 515 and 583 to 657; these read SSIP…APGA and NFTP…VSAG. Positions 450 to 656 are involved in oligomerization; the sequence is VKASSTSDPP…RTRPTTDVSA (207 aa). A compositionally biased stretch (polar residues) spans 474–489; it reads VTASAETLSTAGTTES. The segment covering 613–652 has biased composition (low complexity); it reads TTTNSSRGTNSTLAKITTSAKTTMKPPTATPTTARTRPTT. N-linked (GlcNAc...) asparagine glycosylation is found at Asn-616 and Asn-622. The interaction with MET stretch occupies residues 657 to 709; sequence GENGGFLLLRLSVASPEDLTDPRVAERLMQQLHRELHAHAPHFQVSLLRVRRG.

Interacts with MET; oligomerization increases affinity for MET. As to expression, highly expressed in kidney, moderately in placenta, lung, prostate, liver, and digestive system. In the kidney, localized in the proximal tubules but not in the glomerulus or distal tubules. Detected in most of the male urogenital tract epithelia, with the exception of epididymis.

It localises to the secreted. The protein localises to the apical cell membrane. It is found in the basolateral cell membrane. Its subcellular location is the cell projection. The protein resides in the microvillus membrane. In terms of biological role, may regulate MET signaling cascade. Seems to decrease hepatocyte growth factor (HGF)-induced transient MAPK activation. Blocks GRB2 recruitment to MET thus suppressing the GRB2-RAS pathway. Inhibits HGF-induced proliferation of MMP1 and MMP9 expression. The protein is Mucin-20 (MUC20) of Homo sapiens (Human).